Here is a 654-residue protein sequence, read N- to C-terminus: Endoplasmic reticulum chaperone BiP (654 aa).

The N-terminal stretch at 1 to 18 (MKFTVVAAALLLLCAVRA) is a signal peptide. The segment at 1-80 (MKFTVVAAAL…EGERLIGDAA (80 aa)) is required for interaction with ELAPOR1. An ATP-binding site is contributed by 36-39 (GTTY). A Phosphoserine modification is found at serine 86. An ATP-binding site is contributed by lysine 96. Position 125 is an N6-acetyllysine (lysine 125). Residues 125–280 (KPYIQVDIGG…KKKTGKDVRK (156 aa)) are nucleotide-binding (NBD). Position 160 is a 3'-nitrotyrosine (tyrosine 160). Lysine 213 bears the N6-acetyllysine mark. 227–229 (GGT) contacts ATP. Lysine 271 bears the N6-acetyllysine mark. 293–300 (EKAKRALS) contributes to the ATP binding site. Residue lysine 326 is modified to N6-acetyllysine. Lysine 352 is covalently cross-linked (Glycyl lysine isopeptide (Lys-Gly) (interchain with G-Cter in SUMO2)). The residue at position 353 (lysine 353) is an N6-acetyllysine; alternate. Lysine 353 participates in a covalent cross-link: Glycyl lysine isopeptide (Lys-Gly) (interchain with G-Cter in SUMO1); alternate. 364 to 367 (GSTR) is a binding site for ATP. The tract at residues 409–419 (QDTGDLVLLDV) is interdomain linker. Residues 420–500 (CPLTLGIETV…PRGVPQIEVT (81 aa)) form a substrate-binding (SBD) region. At lysine 447 the chain carries N6-succinyllysine. At arginine 492 the chain carries Omega-N-methylarginine. The residue at position 518 (threonine 518) is an O-AMP-threonine; alternate. The residue at position 518 (threonine 518) is a Phosphothreonine; alternate. Lysine 585 bears the N6,N6,N6-trimethyllysine; by METTL21A; in vitro mark. Lysine 585 bears the N6,N6-dimethyllysine; alternate mark. An N6-methyllysine; alternate modification is found at lysine 585. Lysine 591 is subject to N6-methyllysine. A disordered region spans residues 631–654 (ISKLYGSGGPPPTGEEDTSEKDEL). A phosphothreonine mark is found at threonine 643 and threonine 648. Over residues 644 to 654 (GEEDTSEKDEL) the composition is skewed to acidic residues. Serine 649 bears the Phosphoserine mark. Positions 651 to 654 (KDEL) match the Prevents secretion from ER motif.

This sequence belongs to the heat shock protein 70 family. As to quaternary structure, monomer and homooligomer; homooligomerization via the interdomain linker inactivates the chaperone activity and acts as a storage of HSPA5/BiP molecules. Interacts with DNAJC1 (via J domain). Component of an EIF2 complex at least composed of CELF1/CUGBP1, CALR, CALR3, EIF2S1, EIF2S2, HSP90B1 and HSPA5. Part of a large chaperone multiprotein complex comprising DNAJB11, HSP90B1, HSPA5, HYOU, PDIA2, PDIA4, PDIA6, PPIB, SDF2L1, UGGT1 and very small amounts of ERP29, but not, or at very low levels, CALR nor CANX. Interacts with TMEM132A and TRIM21. May form a complex with ERLEC1, OS9, SEL1L and SYVN1. Interacts with DNAJC10. Interacts with DNAJB9/ERdj4; leading to recruit HSPA5/BiP to ERN1/IRE1. Interacts with ERN1/IRE1 (via luminal domain); the interaction takes place following interaction with DNAJB9/ERdj4 and leads to inactivate ERN1/IRE1, the interaction also competitively inhibits ERN1 interaction with MANF. Interacts directly with MANF (via SAP domain); the interaction inhibits ATP binding to HSPA5/BiP and subsequent nucleotide exchange. Interacts with EIF2AK3/PERK (via luminal domain); interaction leads to inactivate EIF2AK3/PERK. Interacts with MX1. Interacts with METTL23. Interacts with CEMIP; the interaction induces calcium leakage from the endoplasmic reticulum and cell migration. Interacts with PCSK4 form; the interaction takes place in the endoplasmic reticulum. Interacts with CIPC. Interacts with CCDC88B (via C-terminus); the interaction opposes ERN1-mediated JNK activation, protecting against apoptosis. Interacts with INPP5K; necessary for INPP5K localization at the endoplasmic reticulum. Interacts with MANF; the interaction is direct. Interacts with LOXL2; leading to activate the ERN1/IRE1-XBP1 pathway of the unfolded protein response. Interacts with CLU under stressed condition; interaction increases CLU protein stability; facilitates its retrotranslocation and redistribution to the mitochondria; cooperatively suppress stress-induced apoptosis by stabilizing mitochondrial membrane integrity. Interacts with CCDC47. Interacts with CLN3. Interacts with ELAPOR1; may regulate the function of HSPA5 in apoptosis and cell proliferation. Interacts with CASP7. Interacts with ILDR2; the interaction stabilizes ILDR2 expression. Interacts with ADAM7. In unstressed cells, AMPylation at Thr-518 by FICD inactivates the chaperome activity: AMPylated form is locked in a relatively inert state and only weakly stimulated by J domain-containing proteins. In response to endoplasmic reticulum stress, de-AMPylation by the same protein, FICD, restores the chaperone activity.

The protein localises to the endoplasmic reticulum lumen. The protein resides in the melanosome. It is found in the cytoplasm. Its subcellular location is the cell surface. It catalyses the reaction ATP + H2O = ADP + phosphate + H(+). With respect to regulation, the chaperone activity is regulated by ATP-induced allosteric coupling of the nucleotide-binding (NBD) and substrate-binding (SBD) domains. In the ADP-bound and nucleotide-free (apo) states, the two domains have little interaction. In contrast, in the ATP-bound state the two domains are tightly coupled, which results in drastically accelerated kinetics in both binding and release of polypeptide substrates. J domain-containing co-chaperones (DNAJB9/ERdj4 or DNAJC10/ERdj5) stimulate the ATPase activity and are required for efficient substrate recognition by HSPA5/BiP. Homooligomerization inactivates participating HSPA5/BiP protomers and probably act as reservoirs to store HSPA5/BiP molecules when they are not needed by the cell. Functionally, endoplasmic reticulum chaperone that plays a key role in protein folding and quality control in the endoplasmic reticulum lumen. Involved in the correct folding of proteins and degradation of misfolded proteins via its interaction with DNAJC10/ERdj5, probably to facilitate the release of DNAJC10/ERdj5 from its substrate. Acts as a key repressor of the EIF2AK3/PERK and ERN1/IRE1-mediated unfolded protein response (UPR). In the unstressed endoplasmic reticulum, recruited by DNAJB9/ERdj4 to the luminal region of ERN1/IRE1, leading to disrupt the dimerization of ERN1/IRE1, thereby inactivating ERN1/IRE1. Also binds and inactivates EIF2AK3/PERK in unstressed cells. Accumulation of misfolded protein in the endoplasmic reticulum causes release of HSPA5/BiP from ERN1/IRE1 and EIF2AK3/PERK, allowing their homodimerization and subsequent activation. Plays an auxiliary role in post-translational transport of small presecretory proteins across endoplasmic reticulum (ER). May function as an allosteric modulator for SEC61 channel-forming translocon complex, likely cooperating with SEC62 to enable the productive insertion of these precursors into SEC61 channel. Appears to specifically regulate translocation of precursors having inhibitory residues in their mature region that weaken channel gating. May also play a role in apoptosis and cell proliferation. The polypeptide is Endoplasmic reticulum chaperone BiP (Rattus norvegicus (Rat)).